A 98-amino-acid chain; its full sequence is Integration host factor subunit alpha (98 aa).

The tract at residues 50-71 (GNFDLRDKNQRPGRNPKTGEDI) is disordered.

This sequence belongs to the bacterial histone-like protein family. Heterodimer of an alpha and a beta chain.

Its function is as follows. This protein is one of the two subunits of integration host factor, a specific DNA-binding protein that functions in genetic recombination as well as in transcriptional and translational control. In Proteus mirabilis (strain HI4320), this protein is Integration host factor subunit alpha.